The following is a 367-amino-acid chain: 4-hydroxy-3-methylbut-2-en-1-yl diphosphate synthase (flavodoxin) (367 aa).

[4Fe-4S] cluster contacts are provided by Cys-270, Cys-273, Cys-305, and Glu-312.

This sequence belongs to the IspG family. [4Fe-4S] cluster is required as a cofactor.

It carries out the reaction (2E)-4-hydroxy-3-methylbut-2-enyl diphosphate + oxidized [flavodoxin] + H2O + 2 H(+) = 2-C-methyl-D-erythritol 2,4-cyclic diphosphate + reduced [flavodoxin]. It participates in isoprenoid biosynthesis; isopentenyl diphosphate biosynthesis via DXP pathway; isopentenyl diphosphate from 1-deoxy-D-xylulose 5-phosphate: step 5/6. Its function is as follows. Converts 2C-methyl-D-erythritol 2,4-cyclodiphosphate (ME-2,4cPP) into 1-hydroxy-2-methyl-2-(E)-butenyl 4-diphosphate. This chain is 4-hydroxy-3-methylbut-2-en-1-yl diphosphate synthase (flavodoxin), found in Pasteurella multocida (strain Pm70).